The chain runs to 455 residues: Ammonium transporter Rh type B (455 aa).

At 1 to 10 the chain is on the cytoplasmic side; that stretch reads MARVPRHRRL. Residues 11–31 traverse the membrane as a helical segment; it reads VLPLLCLLFQGATALLFAIFV. The Extracellular segment spans residues 32-58; sequence RYNHETDAALWHWGNHSNVDNEFYFRY. A glycan (N-linked (GlcNAc...) asparagine) is linked at asparagine 46. A helical transmembrane segment spans residues 59-79; it reads PSFQDVHVMVFVGFGFLMVFL. Topologically, residues 80 to 83 are cytoplasmic; that stretch reads QRYG. The helical transmembrane segment at 84–104 threads the bilayer; sequence FSSVGFTFLVASLTLQWATLL. Residues 105–121 are Extracellular-facing; sequence QGFLHSFHGGHIHVGVE. A helical membrane pass occupies residues 122–142; the sequence is SLINADFCAGAVLISFGAVLG. Residues 143 to 146 lie on the Cytoplasmic side of the membrane; that stretch reads KTGP. Residues 147 to 167 traverse the membrane as a helical segment; it reads AQLLLMALLEAVLFSVNEFIL. Over 168–175 the chain is Extracellular; the sequence is LSLLGVRD. Residues 176-198 form a helical membrane-spanning segment; that stretch reads AGGSMTIHTFGAYFGLFLSWVLY. Residues 199–216 are Cytoplasmic-facing; that stretch reads RSQLEKSRHRQSSVYNSD. A helical transmembrane segment spans residues 217-237; the sequence is LFAMIGTIFLWVFWPSFNSAP. The Extracellular portion of the chain corresponds to 238-248; the sequence is TALGDGQHRTV. Residues 249–269 traverse the membrane as a helical segment; sequence VNTYYSLTASTLSTFALSALV. Over 270–279 the chain is Cytoplasmic; the sequence is SGDGRLDMVH. Residues 280 to 300 form a helical membrane-spanning segment; that stretch reads VQNAALAGGVVVGTSSEMMLT. Position 301 (proline 301) is a topological domain, extracellular. The chain crosses the membrane as a helical span at residues 302–322; it reads FGALAAGFLAGTVSTLGYKFF. Residues 323–343 lie on the Cytoplasmic side of the membrane; that stretch reads TPILESRFKLQDTCGVHNLHG. A helical membrane pass occupies residues 344 to 364; that stretch reads MPGVLGAILGVVVAALATHEA. At 365-390 the chain is on the extracellular side; it reads YGDGLQSVFPLIAKGQRSATSQAVYQ. A helical membrane pass occupies residues 391–411; that stretch reads LFGMFVTLVFASVGGSLGGLL. Residues 412–455 lie on the Cytoplasmic side of the membrane; the sequence is LRLPFLDSPPDSQCFEDQVYWEVPGEQETETQRPLRGGESDTRA. The interaction with ANK3 stretch occupies residues 413 to 421; that stretch reads RLPFLDSPP. The interval 434 to 455 is disordered; the sequence is VPGEQETETQRPLRGGESDTRA. A compositionally biased stretch (basic and acidic residues) spans 441-455; sequence ETQRPLRGGESDTRA.

This sequence belongs to the ammonium transporter (TC 2.A.49) family. Rh subfamily. As to quaternary structure, interacts (via C-terminus) with ANK2 and ANK3; required for targeting to the basolateral membrane. Post-translationally, N-glycosylated. As to expression, expressed in kidney by connecting segments and collecting tubules. Also expressed in liver by perivenous hepatocytes. Expressed in the forestomach and the fundus of the stomach. Expressed in duodenum, jejunum, ileum and colon at the level of villous (at protein level). Specifically expressed in kidney where it is restricted to the epithelial linings of the convoluted tubules and the loop of Henle. Also detected in ovary. Expressed by hepatocytes and dermal hair follicles and papillae.

It is found in the cell membrane. The protein localises to the basolateral cell membrane. It catalyses the reaction NH4(+)(in) = NH4(+)(out). It carries out the reaction methylamine(out) = methylamine(in). The catalysed reaction is CO2(out) = CO2(in). Inhibited by amiloride. Functionally, ammonium transporter involved in the maintenance of acid-base homeostasis. Transports ammonium and its related derivative methylammonium across the basolateral plasma membrane of epithelial cells likely contributing to renal transepithelial ammonia transport and ammonia metabolism. May transport either NH4(+) or NH3 ammonia species predominantly mediating an electrogenic NH4(+) transport. May act as a CO2 channel providing for renal acid secretion. The chain is Ammonium transporter Rh type B (Rhbg) from Mus musculus (Mouse).